The sequence spans 404 residues: Plasma serine protease inhibitor (404 aa).

Positions 1–19 (MRLCLFLCLVLLGPRMATL) are cleaved as a signal peptide. A propeptide spans 20 to 24 (RRSQK) (removed in mature form). Thr35 and Thr36 each carry an O-linked (GalNAc...) threonine glycan. N-linked (GlcNAc...) asparagine glycosylation is found at Asn245, Asn258, and Asn334.

This sequence belongs to the serpin family. In terms of assembly, forms protease inhibiting heterodimers in extracellular body fluids with serine proteases such as activated protein C/coagulation factor V/F5, acrosin/ACR, chymotrypsinogen B/CTRB1, prothrombin/F2, factor Xa/F10, factor XI/F11, kallikrein/KLKB1, tissue kallikrein, trypsin/PRSS1, prostate specific antigen/KLK3, tissue plasminogen activator/PLAT and urinary plasminogen activator/PLAU. Forms membrane-anchored serine proteases inhibiting heterodimers with TMPRSS7 and TMPRSS11E. Interacts with SEMG2. N-glycosylated; glycans consist of a mixture of sialylated bi- (including sialyl-Lewis X epitopes), tri- and tetra-antennary complex-type chains; affects the maximal heparin- and thrombomodulin-enhanced rates of thrombin inhibition. O-glycosylated; further modified with 2 sialic acid residues. Proteolytically cleaved at the N-terminus; inhibits slightly the heparin- and thrombomodulin-enhanced rates of thrombin inhibition. N- and O-glycosylated. In terms of processing, proteolytically cleaved. Inhibition of proteases is accompanied by formation of a stable enzyme-inhibitor complex and by degradation of the serpin to lower molecular weight derivatives. Expressed strongly in the liver, and moderately in the kidney and testis, but not in other tissues tested.

The protein resides in the secreted. It localises to the extracellular space. Its inhibitory activity is greatly enhanced in the presence of glycosaminoglycans, heparin, thrombomodulin and phospholipids vesicles. Functionally, heparin-dependent serine protease inhibitor acting in body fluids and secretions. Inactivates serine proteases by binding irreversibly to their serine activation site. Involved in the regulation of intravascular and extravascular proteolytic activities. Plays hemostatic roles in the blood plasma. Acts as a procoagulant and pro-inflammatory factor by inhibiting the anticoagulant activated protein C factor as well as the generation of activated protein C factor by the thrombin/thrombomodulin complex. Acts as an anticoagulant factor by inhibiting blood coagulation factors like prothrombin, factor XI, factor Xa, plasma kallikrein and fibrinolytic enzymes such as tissue- and urinary-type plasminogen activators. In seminal plasma, inactivates several serine proteases implicated in the reproductive system. Inhibits the serpin acrosin; indirectly protects component of the male genital tract from being degraded by excessive released acrosin. Inhibits tissue- and urinary-type plasminogen activator, prostate-specific antigen and kallikrein activities; has a control on the sperm motility and fertilization. Inhibits the activated protein C-catalyzed degradation of SEMG1 and SEMG2; regulates the degradation of semenogelin during the process of transfer of spermatozoa from the male reproductive tract into the female tract. In urine, inhibits urinary-type plasminogen activator and kallikrein activities. Inactivates membrane-anchored serine proteases activities such as MPRSS7 and TMPRSS11E. Inhibits urinary-type plasminogen activator-dependent tumor cell invasion and metastasis. May also play a non-inhibitory role in seminal plasma and urine as a hydrophobic hormone carrier by its binding to retinoic acid. This is Plasma serine protease inhibitor (SERPINA5) from Bos taurus (Bovine).